Here is a 385-residue protein sequence, read N- to C-terminus: Polyketide synthase 1 (385 aa).

Cys157 is an active-site residue.

Belongs to the thiolase-like superfamily. Chalcone/stilbene synthases family. In terms of tissue distribution, expressed in glandular trichomes.

The protein resides in the cytoplasm. In terms of biological role, polyketide synthase responsible for the biosynthesis of secondary metabolites. This chain is Polyketide synthase 1 (PKSG1), found in Cannabis sativa (Hemp).